A 316-amino-acid polypeptide reads, in one-letter code: MDLTNSTFLSNQLTPFLSFSREQWAELRKSVPLTLTEQDLKPLLGINEELSLDEVRTIYLPLVRLINYYIEERIQRQQVMNRFLGVNPDKVPYIISIAGSVAVGKSTSARILQSLLSQWPERRKVDLITTDGFLYPLAKLQQDNLLHKKGFPVSYDTARLVRFLADIKSGKPKVSAPVYSHLIYDIVPDQFDVVDQPDILILEGLNVLQTGDRSSQTFVSDFVDFSIYVDADEDLLKAWYISRFLKFRQSAFSDPNSYFKHYATLSEPEAISTAGRIWDEINGLNLRENILPTRERANLILTKGTDHAVELVKLRK.

99-106 (GSVAVGKS) contacts ATP.

This sequence belongs to the prokaryotic pantothenate kinase family.

It is found in the cytoplasm. The enzyme catalyses (R)-pantothenate + ATP = (R)-4'-phosphopantothenate + ADP + H(+). Its pathway is cofactor biosynthesis; coenzyme A biosynthesis; CoA from (R)-pantothenate: step 1/5. The protein is Pantothenate kinase (coaA) of Pasteurella multocida (strain Pm70).